We begin with the raw amino-acid sequence, 84 residues long: Large ribosomal subunit protein bL27 (84 aa).

The disordered stretch occupies residues 1 to 20; sequence MAHKKAGGSTRNGRDSNPKY.

Belongs to the bacterial ribosomal protein bL27 family.

This is Large ribosomal subunit protein bL27 from Francisella tularensis subsp. tularensis (strain FSC 198).